Here is a 665-residue protein sequence, read N- to C-terminus: Ion-translocating oxidoreductase complex subunit C (665 aa).

2 consecutive 4Fe-4S ferredoxin-type domains span residues 368–398 (EYAEPEAEQACIRCSSCSDACPVNLMPQQLY) and 408–437 (KSEEYALKDCIECGICAYVCPSHIPLIQYF). The [4Fe-4S] cluster site is built by C378, C381, C384, C388, C417, C420, C423, and C427. Basic and acidic residues-rich tracts occupy residues 465–477 (QARMEREEQERKA) and 485–513 (ARREELAQTKGEDPVKAALERLKAKKANE). 3 disordered regions span residues 465–568 (QARM…DAKK), 580–623 (AKKL…LDPK), and 637–665 (KKLAQANSTSEAISNSQTAENEVEKQIVR). 2 stretches are compositionally biased toward polar residues: residues 554-564 (VENQEQQTQPT) and 585-600 (QTNSTSEAISNSQTAE). Over residues 602 to 615 (EVEKTKSAVEKTEE) the composition is skewed to basic and acidic residues. Positions 643–656 (NSTSEAISNSQTAE) are enriched in polar residues.

The protein belongs to the 4Fe4S bacterial-type ferredoxin family. RnfC subfamily. The complex is composed of six subunits: RnfA, RnfB, RnfC, RnfD, RnfE and RnfG. Requires [4Fe-4S] cluster as cofactor.

The protein localises to the cell inner membrane. Its function is as follows. Part of a membrane-bound complex that couples electron transfer with translocation of ions across the membrane. The sequence is that of Ion-translocating oxidoreductase complex subunit C from Haemophilus influenzae (strain 86-028NP).